Here is a 408-residue protein sequence, read N- to C-terminus: 3-phosphoshikimate 1-carboxyvinyltransferase (408 aa).

3-phosphoshikimate is bound by residues lysine 10, serine 11, and arginine 15. Lysine 10 provides a ligand contact to phosphoenolpyruvate. Phosphoenolpyruvate is bound by residues glycine 79 and arginine 107. Residues serine 150, serine 151, glutamine 152, serine 179, glutamate 297, and histidine 324 each coordinate 3-phosphoshikimate. Glutamine 152 serves as a coordination point for phosphoenolpyruvate. Catalysis depends on glutamate 297, which acts as the Proton acceptor. 3 residues coordinate phosphoenolpyruvate: arginine 328, arginine 369, and lysine 394.

This sequence belongs to the EPSP synthase family. Monomer.

The protein localises to the cytoplasm. It carries out the reaction 3-phosphoshikimate + phosphoenolpyruvate = 5-O-(1-carboxyvinyl)-3-phosphoshikimate + phosphate. The protein operates within metabolic intermediate biosynthesis; chorismate biosynthesis; chorismate from D-erythrose 4-phosphate and phosphoenolpyruvate: step 6/7. Catalyzes the transfer of the enolpyruvyl moiety of phosphoenolpyruvate (PEP) to the 5-hydroxyl of shikimate-3-phosphate (S3P) to produce enolpyruvyl shikimate-3-phosphate and inorganic phosphate. The sequence is that of 3-phosphoshikimate 1-carboxyvinyltransferase from Corynebacterium efficiens (strain DSM 44549 / YS-314 / AJ 12310 / JCM 11189 / NBRC 100395).